Consider the following 138-residue polypeptide: Protein FAM136A (138 aa).

It belongs to the FAM136 family.

This is Protein FAM136A (fam136a) from Xenopus laevis (African clawed frog).